The following is a 1769-amino-acid chain: U3 small nucleolar RNA-associated protein 10 (1769 aa).

Residue Ser-2 is modified to N-acetylserine. The stretch at 1729-1767 (LVPVIAELLEDDDEEIEREVRTGLVKVVENVLGEPFDRY) is one HEAT repeat.

It belongs to the HEATR1/UTP10 family. In terms of assembly, interacts with snoRNA U3. Interacts with MPP10. Component of the ribosomal small subunit (SSU) processome composed of at least 40 protein subunits and snoRNA U3. In the absence of snoRNA3, forms a complex with other t-UTPs. This complex can associate with pre-18S ribosomal RNAs.

It is found in the nucleus. The protein localises to the nucleolus. It localises to the mitochondrion. Involved in nucleolar processing of pre-18S ribosomal RNA. Required for optimal pre-ribosomal RNA transcription by RNA polymerase I together with a subset of U3 proteins required for transcription (t-UTPs). Involved in ribosome biosynthesis. The polypeptide is U3 small nucleolar RNA-associated protein 10 (UTP10) (Saccharomyces cerevisiae (strain ATCC 204508 / S288c) (Baker's yeast)).